Consider the following 111-residue polypeptide: Cytochrome c (111 aa).

Residue Ala-1 is modified to N-acetylalanine. Heme c-binding residues include Cys-22, Cys-25, and His-26. The residue at position 80 (Lys-80) is an N6,N6,N6-trimethyllysine. Met-88 contributes to the heme c binding site. At Lys-94 the chain carries N6,N6,N6-trimethyllysine.

It belongs to the cytochrome c family. Post-translationally, binds 1 heme c group covalently per subunit.

The protein localises to the mitochondrion intermembrane space. In terms of biological role, electron carrier protein. The oxidized form of the cytochrome c heme group can accept an electron from the heme group of the cytochrome c1 subunit of cytochrome reductase. Cytochrome c then transfers this electron to the cytochrome oxidase complex, the final protein carrier in the mitochondrial electron-transport chain. The polypeptide is Cytochrome c (Sesamum indicum (Oriental sesame)).